The primary structure comprises 1072 residues: DNA-directed RNA polymerase subunit beta (1072 aa).

This sequence belongs to the RNA polymerase beta chain family. As to quaternary structure, in plastids the minimal PEP RNA polymerase catalytic core is composed of four subunits: alpha, beta, beta', and beta''. When a (nuclear-encoded) sigma factor is associated with the core the holoenzyme is formed, which can initiate transcription.

The protein localises to the plastid. The protein resides in the chloroplast. The catalysed reaction is RNA(n) + a ribonucleoside 5'-triphosphate = RNA(n+1) + diphosphate. Its function is as follows. DNA-dependent RNA polymerase catalyzes the transcription of DNA into RNA using the four ribonucleoside triphosphates as substrates. The protein is DNA-directed RNA polymerase subunit beta of Lemna minor (Common duckweed).